Consider the following 394-residue polypeptide: Elongation factor Tu 1 (394 aa).

One can recognise a tr-type G domain in the interval 10–204 (KPHVNVGTIG…FLDSYIPEPE (195 aa)). Residues 19-26 (GHVDHGKT) are G1. 19-26 (GHVDHGKT) contacts GTP. Mg(2+) is bound at residue Thr26. The G2 stretch occupies residues 60-64 (GITIN). Positions 81–84 (DCPG) are G3. GTP contacts are provided by residues 81–85 (DCPGH) and 136–139 (NKCD). A G4 region spans residues 136-139 (NKCD). The interval 174 to 176 (SAL) is G5.

It belongs to the TRAFAC class translation factor GTPase superfamily. Classic translation factor GTPase family. EF-Tu/EF-1A subfamily. As to quaternary structure, monomer.

Its subcellular location is the cytoplasm. The catalysed reaction is GTP + H2O = GDP + phosphate + H(+). Functionally, GTP hydrolase that promotes the GTP-dependent binding of aminoacyl-tRNA to the A-site of ribosomes during protein biosynthesis. This Shigella flexneri serotype 5b (strain 8401) protein is Elongation factor Tu 1.